Reading from the N-terminus, the 449-residue chain is Exodeoxyribonuclease 7 large subunit (449 aa).

The protein belongs to the XseA family. In terms of assembly, heterooligomer composed of large and small subunits.

It localises to the cytoplasm. The enzyme catalyses Exonucleolytic cleavage in either 5'- to 3'- or 3'- to 5'-direction to yield nucleoside 5'-phosphates.. In terms of biological role, bidirectionally degrades single-stranded DNA into large acid-insoluble oligonucleotides, which are then degraded further into small acid-soluble oligonucleotides. In Lacticaseibacillus casei (strain BL23) (Lactobacillus casei), this protein is Exodeoxyribonuclease 7 large subunit.